We begin with the raw amino-acid sequence, 316 residues long: Acetaldehyde dehydrogenase (316 aa).

13–16 (SGNI) contacts NAD(+). Cys-131 serves as the catalytic Acyl-thioester intermediate. NAD(+) is bound by residues 162–170 (SAGPGTRAN) and Asn-290.

This sequence belongs to the acetaldehyde dehydrogenase family.

The catalysed reaction is acetaldehyde + NAD(+) + CoA = acetyl-CoA + NADH + H(+). Its function is as follows. Catalyzes the conversion of acetaldehyde to acetyl-CoA, using NAD(+) and coenzyme A. Is the final enzyme in the meta-cleavage pathway for the degradation of 2-aminophenol. The chain is Acetaldehyde dehydrogenase (amnH) from Pseudomonas sp.